Here is a 182-residue protein sequence, read N- to C-terminus: Glycerol-3-phosphate acyltransferase 1 (182 aa).

A run of 5 helical transmembrane segments spans residues 5–25 (MQFL…AYIV), 54–74 (GYFI…VSIA), 81–101 (STFV…PIVF), 117–137 (IAFD…FYLI), and 157–177 (ILYS…VLIL).

This sequence belongs to the PlsY family. In terms of assembly, probably interacts with PlsX.

It localises to the cell membrane. The catalysed reaction is an acyl phosphate + sn-glycerol 3-phosphate = a 1-acyl-sn-glycero-3-phosphate + phosphate. It participates in lipid metabolism; phospholipid metabolism. Its function is as follows. Catalyzes the transfer of an acyl group from acyl-phosphate (acyl-PO(4)) to glycerol-3-phosphate (G3P) to form lysophosphatidic acid (LPA). This enzyme utilizes acyl-phosphate as fatty acyl donor, but not acyl-CoA or acyl-ACP. In Bacillus cereus (strain ATCC 10987 / NRS 248), this protein is Glycerol-3-phosphate acyltransferase 1.